Reading from the N-terminus, the 781-residue chain is Chloride channel protein CLC-f (781 aa).

2 disordered regions span residues 1 to 41 and 79 to 98; these read MSSG…QSPA and RERH…EEDG. The span at 10–20 shows a compositional bias: basic and acidic residues; that stretch reads NEDRHLLRSTD. Transmembrane regions (helical) follow at residues 129–149, 184–204, 221–241, 250–270, 279–299, 314–334, 350–370, 388–408, 433–453, 457–477, 502–522, and 523–543; these read WALL…VAGF, ILLI…LLEI, FLAG…LGTG, SVDI…NNRE, GAAS…FFAI, FTTA…NALL, AAEL…SVVF, FGLP…IIAL, APGI…TALC, GLVG…GAVF, ALVG…TSVL, and LLFE…AVGL. The disordered stretch occupies residues 553–584; that stretch reads QGKESDSSEGRSTGRGYSSLSPSERKTEGVWR. Over residues 575–584 the composition is skewed to basic and acidic residues; the sequence is SERKTEGVWR. 2 consecutive CBS domains span residues 621–677 and 699–763; these read MSKN…NAST and QERG…EMSR. The chain crosses the membrane as a helical span at residues 726-746; sequence QLPVVKRGEVIHKGKRRKLLG.

This sequence belongs to the chloride channel (TC 2.A.49) family. Homodimer.

Its subcellular location is the membrane. In terms of biological role, voltage-gated chloride channel. This is Chloride channel protein CLC-f (CLC-F) from Arabidopsis thaliana (Mouse-ear cress).